We begin with the raw amino-acid sequence, 569 residues long: Potassium-transporting ATPase potassium-binding subunit (569 aa).

Transmembrane regions (helical) follow at residues 3-23, 68-88, 136-156, 179-199, 259-279, 284-304, 384-404, 422-442, 490-510, and 534-554; these read LMEYTQLALFLGLLALMSPVL, AASLCAFSAAGFLMTFGVLML, VGLAYHNFVSAAAGLAVAVAV, VLYVLLPISLVLAVVLVGQGV, LQMLAIFIIPSSLVFTLGEAV, HAWTVWFVMACLFMVGTLSLY, GLYGMVLFILLTVFLAGLMVG, AMLALIIAATPPLLFSAVAAV, LALAMLIGRFGVMLPMLGVAG, and LLLTLVIVIVGALTYLPALAL.

The protein belongs to the KdpA family. The system is composed of three essential subunits: KdpA, KdpB and KdpC.

It localises to the cell inner membrane. Part of the high-affinity ATP-driven potassium transport (or Kdp) system, which catalyzes the hydrolysis of ATP coupled with the electrogenic transport of potassium into the cytoplasm. This subunit binds the periplasmic potassium ions and delivers the ions to the membrane domain of KdpB through an intramembrane tunnel. This Nitratidesulfovibrio vulgaris (strain DP4) (Desulfovibrio vulgaris) protein is Potassium-transporting ATPase potassium-binding subunit.